Consider the following 382-residue polypeptide: Mannitol-1-phosphate 5-dehydrogenase (382 aa).

3–14 provides a ligand contact to NAD(+); sequence AIHFGAGNIGRG.

It belongs to the mannitol dehydrogenase family.

It catalyses the reaction D-mannitol 1-phosphate + NAD(+) = beta-D-fructose 6-phosphate + NADH + H(+). The protein is Mannitol-1-phosphate 5-dehydrogenase of Psychromonas ingrahamii (strain DSM 17664 / CCUG 51855 / 37).